The chain runs to 248 residues: Tyrosine recombinase XerD-like (248 aa).

Residues 1 to 72 (MIAFIEPFLA…TVNQFLYYLY (72 aa)) enclose the Core-binding (CB) domain. Residues 92–248 (SLKPQLTRLD…PITLEKYYKM (157 aa)) enclose the Tyr recombinase domain. Residue arginine 213 is part of the active site. Catalysis depends on tyrosine 245, which acts as the O-(3'-phospho-DNA)-tyrosine intermediate.

This sequence belongs to the 'phage' integrase family. XerD-like subfamily.

The protein localises to the cytoplasm. Functionally, putative tyrosine recombinase. Not involved in the cutting and rejoining of the recombining DNA molecules on dif(SL) site. The chain is Tyrosine recombinase XerD-like from Streptococcus equi subsp. zooepidemicus (strain MGCS10565).